A 188-amino-acid polypeptide reads, in one-letter code: MKVILASASERRQELLSRLIKTFDVIVSNFDESKVIFEGSIDRYVKDIALGKAMNIKNKLDEDAIIISADTVVTIDNMILGKPRDEEDAFNIIKSLQGRKHLVYSGVVVINTAKNLTIQESLSTEVTFSEISDDEILEYIKTGEPLDKAGAYGIQGIGGIFVEEIRGCYYNVVGLPLNKLKFMLKEIQ.

The active-site Proton acceptor is the D70.

This sequence belongs to the Maf family. YhdE subfamily. Requires a divalent metal cation as cofactor.

The protein localises to the cytoplasm. It catalyses the reaction dTTP + H2O = dTMP + diphosphate + H(+). It carries out the reaction UTP + H2O = UMP + diphosphate + H(+). Nucleoside triphosphate pyrophosphatase that hydrolyzes dTTP and UTP. May have a dual role in cell division arrest and in preventing the incorporation of modified nucleotides into cellular nucleic acids. The protein is dTTP/UTP pyrophosphatase of Clostridium beijerinckii (strain ATCC 51743 / NCIMB 8052) (Clostridium acetobutylicum).